Consider the following 435-residue polypeptide: Light-independent protochlorophyllide reductase subunit N (435 aa).

Residues cysteine 23, cysteine 48, and cysteine 108 each coordinate [4Fe-4S] cluster.

This sequence belongs to the BchN/ChlN family. As to quaternary structure, protochlorophyllide reductase is composed of three subunits; ChlL, ChlN and ChlB. Forms a heterotetramer of two ChlB and two ChlN subunits. [4Fe-4S] cluster is required as a cofactor.

The protein resides in the plastid. It localises to the chloroplast. It carries out the reaction chlorophyllide a + oxidized 2[4Fe-4S]-[ferredoxin] + 2 ADP + 2 phosphate = protochlorophyllide a + reduced 2[4Fe-4S]-[ferredoxin] + 2 ATP + 2 H2O. It participates in porphyrin-containing compound metabolism; chlorophyll biosynthesis (light-independent). Component of the dark-operative protochlorophyllide reductase (DPOR) that uses Mg-ATP and reduced ferredoxin to reduce ring D of protochlorophyllide (Pchlide) to form chlorophyllide a (Chlide). This reaction is light-independent. The NB-protein (ChlN-ChlB) is the catalytic component of the complex. The polypeptide is Light-independent protochlorophyllide reductase subunit N (Auxenochlorella protothecoides (Green microalga)).